The chain runs to 478 residues: Crt homolog 3 (478 aa).

A disordered region spans residues Met-1 to Pro-30. Over Met-1–Thr-52 the chain is Cytoplasmic. A helical transmembrane segment spans residues Leu-53–Leu-73. At Lys-74 to Tyr-83 the chain is on the vacuolar side. Residues Gly-84–Trp-104 form a helical membrane-spanning segment. The Cytoplasmic segment spans residues Tyr-105–Lys-124. A helical transmembrane segment spans residues Phe-125–Ser-145. Residues Thr-146–Pro-149 are Vacuolar-facing. Residues Leu-150–Leu-170 traverse the membrane as a helical segment. Topologically, residues Arg-171–Gln-178 are cytoplasmic. Residues Leu-179–Gly-199 traverse the membrane as a helical segment. The Vacuolar portion of the chain corresponds to Gly-200–Asn-205. Residues Ile-206–Tyr-226 form a helical membrane-spanning segment. The Cytoplasmic segment spans residues Lys-227–Asp-237. Residues Val-238–Pro-258 traverse the membrane as a helical segment. Residues Val-259–Trp-322 are Vacuolar-facing. Asn-296 carries N-linked (GlcNAc...) asparagine glycosylation. Residues Ile-323–Leu-343 form a helical membrane-spanning segment. Topologically, residues Lys-344–Ser-352 are cytoplasmic. Residues Ile-353 to Gly-373 form a helical membrane-spanning segment. The Vacuolar segment spans residues Ala-374–Thr-376. Residues Thr-377–Tyr-397 form a helical membrane-spanning segment. Residues Arg-398–Asn-478 are Cytoplasmic-facing. A disordered region spans residues Lys-404 to Gln-446. Basic and acidic residues predominate over residues Pro-406–Glu-415.

It belongs to the CRT-like transporter family.

It localises to the vacuole membrane. In terms of biological role, nutrient transporter. Involved in maintaining the osmotic homeostasis of the digestive vacuole. The polypeptide is Crt homolog 3 (crtp3) (Dictyostelium discoideum (Social amoeba)).